The sequence spans 136 residues: Histone H3.3C (136 aa).

Residues 1-10 (MARTKQTACK) show a composition bias toward polar residues. Positions 1–39 (MARTKQTACKSTGRKAPRKQLATKAAHKSAPAMGGVKKP) are disordered. Arginine 3 is subject to Asymmetric dimethylarginine; by PRMT6. Threonine 4 is subject to Phosphothreonine; by HASPIN. Lysine 5 carries the post-translational modification Allysine; alternate. Lysine 5 carries the post-translational modification N6,N6,N6-trimethyllysine; alternate. N6,N6-dimethyllysine; alternate is present on lysine 5. Lysine 5 bears the N6-(2-hydroxyisobutyryl)lysine; alternate mark. Position 5 is an N6-acetyllysine; alternate (lysine 5). The residue at position 5 (lysine 5) is an N6-methyllysine; alternate. Glutamine 6 carries the post-translational modification 5-glutamyl dopamine; alternate. Glutamine 6 carries the 5-glutamyl serotonin; alternate modification. Threonine 7 carries the phosphothreonine; by PKC modification. N6-(2-hydroxyisobutyryl)lysine; alternate is present on lysine 10. Lysine 10 carries the N6-lactoyllysine; alternate modification. Lysine 10 is modified (N6-methylated lysine). Serine 11 is subject to ADP-ribosylserine; alternate. Serine 11 carries the phosphoserine; alternate; by AURKB, AURKC, RPS6KA3, RPS6KA4 and RPS6KA5 modification. Threonine 12 carries the phosphothreonine; by PKC modification. Lysine 15 carries the post-translational modification N6-(2-hydroxyisobutyryl)lysine; alternate. N6-lactoyllysine; alternate is present on lysine 15. Lysine 15 bears the N6-acetyllysine mark. Lysine 15 bears the N6-glutaryllysine; alternate mark. At arginine 18 the chain carries Asymmetric dimethylarginine. Lysine 19, lysine 24, and lysine 28 each carry N6-(2-hydroxyisobutyryl)lysine; alternate. At lysine 19 the chain carries N6-acetyllysine; alternate. 3 positions are modified to N6-lactoyllysine; alternate: lysine 19, lysine 24, and lysine 28. N6-glutaryllysine; alternate occurs at positions 19, 24, and 28. N6-butyryllysine; alternate is present on residues lysine 19 and lysine 24. Lysine 19 carries the post-translational modification N6-methylated lysine; alternate. N6-acetyllysine is present on lysine 24. Residue lysine 28 is modified to N6-acetyllysine; alternate. Lysine 28 is modified (N6-methylated lysine; alternate). Position 29 is an ADP-ribosylserine; alternate (serine 29). At serine 29 the chain carries Phosphoserine; alternate; by AURKB, AURKC and RPS6KA5. Residue lysine 37 is modified to N6-(2-hydroxyisobutyryl)lysine; alternate. Lysine 37 is modified (N6-acetyllysine; alternate). N6-methylated lysine; alternate is present on lysine 37. At tyrosine 42 the chain carries Phosphotyrosine. Lysine 57 is modified (N6-(2-hydroxyisobutyryl)lysine; alternate). N6-lactoyllysine; alternate is present on lysine 57. Position 57 is an N6-glutaryllysine; alternate (lysine 57). Lysine 57 is modified (N6-succinyllysine; alternate). Phosphoserine is present on serine 58. 2 positions are modified to N6-(2-hydroxyisobutyryl)lysine; alternate: lysine 65 and lysine 80. Lysine 65 and lysine 80 each carry N6-methylated lysine. Lysine 80 carries the N6-lactoyllysine; alternate modification. Lysine 80 is modified (N6-glutaryllysine; alternate). Lysine 80 carries the post-translational modification N6-succinyllysine; alternate. Threonine 81 is subject to Phosphothreonine. An N6-acetyllysine; alternate mark is found at lysine 116 and lysine 123. 2 positions are modified to N6-glutaryllysine; alternate: lysine 116 and lysine 123. Lysine 123 carries the post-translational modification N6-(2-hydroxyisobutyryl)lysine; alternate. Position 123 is an N6-methylated lysine; alternate (lysine 123). N6-succinyllysine; alternate is present on lysine 123.

It belongs to the histone H3 family. As to quaternary structure, the nucleosome is a histone octamer containing two molecules each of H2A, H2B, H3 and H4 assembled in one H3-H4 heterotetramer and two H2A-H2B heterodimers. The octamer wraps approximately 147 bp of DNA. Acetylation is generally linked to gene activation. Acetylation on Lys-19 (H3K18ac) and Lys-24 (H3K24ac) favors methylation at Arg-18 (H3R17me). Acetylation at Lys-123 (H3K122ac) by EP300/p300 plays a central role in chromatin structure: localizes at the surface of the histone octamer and stimulates transcription, possibly by promoting nucleosome instability. Post-translationally, asymmetric dimethylation at Arg-18 (H3R17me2a) is linked to gene activation. Asymmetric dimethylation at Arg-3 (H3R2me2a) by PRMT6 is linked to gene repression and is mutually exclusive with H3 Lys-5 methylation (H3K4me2 and H3K4me3). H3R2me2a is present at the 3' of genes regardless of their transcription state and is enriched on inactive promoters, while it is absent on active promoters. In terms of processing, methylation at Lys-5 (H3K4me) and Lys-80 (H3K79me) are linked to gene activation. Methylation at Lys-5 (H3K4me) facilitates subsequent acetylation of H3 and H4. Methylation at Lys-80 (H3K79me) is associated with DNA double-strand break (DSB) responses and is a specific target for TP53BP1. Methylation at Lys-10 (H3K9me) and Lys-28 (H3K27me) are linked to gene repression. Methylation at Lys-10 (H3K9me) is a specific target for HP1 proteins (CBX1, CBX3 and CBX5) and prevents subsequent phosphorylation at Ser-11 (H3S10ph) and acetylation of H3 and H4. Methylation at Lys-5 (H3K4me) and Lys-80 (H3K79me) require preliminary monoubiquitination of H2B at 'Lys-120'. Phosphorylated at Thr-4 (H3T3ph) by HASPIN during prophase and dephosphorylated during anaphase. Phosphorylation at Ser-11 (H3S10ph) by AURKB is crucial for chromosome condensation and cell-cycle progression during mitosis and meiosis. In addition phosphorylation at Ser-11 (H3S10ph) by RPS6KA4 and RPS6KA5 is important during interphase because it enables the transcription of genes following external stimulation, like mitogens, stress, growth factors or UV irradiation and result in the activation of genes, such as c-fos and c-jun. Phosphorylation at Ser-11 (H3S10ph), which is linked to gene activation, prevents methylation at Lys-10 (H3K9me) but facilitates acetylation of H3 and H4. Phosphorylation at Ser-11 (H3S10ph) by AURKB mediates the dissociation of HP1 proteins (CBX1, CBX3 and CBX5) from heterochromatin. Phosphorylation at Ser-11 (H3S10ph) is also an essential regulatory mechanism for neoplastic cell transformation. Phosphorylated at Ser-29 (H3S28ph) by MAP3K20 isoform 1, RPS6KA5 or AURKB during mitosis or upon ultraviolet B irradiation. Phosphorylation at Thr-7 (H3T6ph) by PRKCB is a specific tag for epigenetic transcriptional activation that prevents demethylation of Lys-5 (H3K4me) by LSD1/KDM1A. At centromeres, specifically phosphorylated at Thr-12 (H3T11ph) from prophase to early anaphase, by DAPK3 and PKN1. Phosphorylation at Thr-12 (H3T11ph) by PKN1 or isoform M2 of PKM (PKM2) is a specific tag for epigenetic transcriptional activation that promotes demethylation of Lys-10 (H3K9me) by KDM4C/JMJD2C. Phosphorylation at Tyr-42 (H3Y41ph) by JAK2 promotes exclusion of CBX5 (HP1 alpha) from chromatin. Post-translationally, lysine deamination at Lys-5 (H3K4all) to form allysine only takes place on H3K4me3 and results in gene repression. In terms of processing, butyrylation of histones marks active promoters and competes with histone acetylation. It is present during late spermatogenesis. Succinylation at Lys-80 (H3K79succ) by KAT2A takes place with a maximum frequency around the transcription start sites of genes. It gives a specific tag for epigenetic transcription activation. Desuccinylation at Lys-123 (H3K122succ) by SIRT7 in response to DNA damage promotes chromatin condensation and double-strand breaks (DSBs) repair. Post-translationally, serine ADP-ribosylation constitutes the primary form of ADP-ribosylation of proteins in response to DNA damage. Serine ADP-ribosylation at Ser-11 (H3S10ADPr) is mutually exclusive with phosphorylation at Ser-11 (H3S10ph) and impairs acetylation at Lys-10 (H3K9ac).

It is found in the nucleus. The protein localises to the chromosome. Its function is as follows. Core component of nucleosome. Nucleosomes wrap and compact DNA into chromatin, limiting DNA accessibility to the cellular machineries which require DNA as a template. Histones thereby play a central role in transcription regulation, DNA repair, DNA replication and chromosomal stability. DNA accessibility is regulated via a complex set of post-translational modifications of histones, also called histone code, and nucleosome remodeling. The chain is Histone H3.3C from Cairina moschata (Muscovy duck).